The sequence spans 279 residues: Dehydrogenase/reductase SDR family member 4 (279 aa).

37–61 (LVTASTDGIGFAIARRLAEDGAHVV) contacts NADP(+). K93 carries the N6-acetyllysine; alternate modification. K93 bears the N6-succinyllysine; alternate mark. K106 carries the post-translational modification N6-acetyllysine. S170 is a substrate binding site. The active-site Proton acceptor is the Y183. K187 contributes to the NADP(+) binding site. K217 is modified (N6-acetyllysine; alternate). At K217 the chain carries N6-succinyllysine; alternate. At S221 the chain carries Phosphoserine. K228 and K235 each carry N6-succinyllysine. Residues 277–279 (SRL) carry the Peroxisomal targeting signal motif.

It belongs to the short-chain dehydrogenases/reductases (SDR) family. In terms of assembly, homotetramer.

The protein resides in the peroxisome. The catalysed reaction is a secondary alcohol + NADP(+) = a ketone + NADPH + H(+). The enzyme catalyses 3alpha-hydroxy-5beta-pregnan-20-one + NADP(+) = 5beta-pregnan-3,20-dione + NADPH + H(+). It carries out the reaction 5beta-dihydrotestosterone + NADPH + H(+) = 5beta-androstane-3alpha,17beta-diol + NADP(+). It catalyses the reaction all-trans-retinol + NADP(+) = all-trans-retinal + NADPH + H(+). The catalysed reaction is isatin + NADPH + H(+) = 3-hydroxyindolin-2-one + NADP(+). Functionally, NADPH-dependent oxidoreductase which catalyzes the reduction of a variety of compounds bearing carbonyl groups including ketosteroids, alpha-dicarbonyl compounds, aldehydes, aromatic ketones and quinones. Reduces all-trans-retinal and 9-cis retinal. Reduces 3-ketosteroids and benzil into 3alpha-hydroxysteroids and S-benzoin, respectively, in contrast to the stereoselectivity of primates DHRS4s which produce 3beta-hydroxysteroids and R-benzoin. In the reverse reaction, catalyzes the NADP-dependent oxidation of 3alpha-hydroxysteroids and alcohol, but with much lower efficiency. Involved in the metabolism of 3alpha-hydroxysteroids, retinoid, isatin and xenobiotic carbonyl compounds. This Mus musculus (Mouse) protein is Dehydrogenase/reductase SDR family member 4.